Here is a 513-residue protein sequence, read N- to C-terminus: Histidine ammonia-lyase (513 aa).

The 5-imidazolinone (Ala-Gly) cross-link spans 145-147; it reads ASG. The residue at position 146 (Ser146) is a 2,3-didehydroalanine (Ser).

This sequence belongs to the PAL/histidase family. In terms of processing, contains an active site 4-methylidene-imidazol-5-one (MIO), which is formed autocatalytically by cyclization and dehydration of residues Ala-Ser-Gly.

It localises to the cytoplasm. The catalysed reaction is L-histidine = trans-urocanate + NH4(+). Its pathway is amino-acid degradation; L-histidine degradation into L-glutamate; N-formimidoyl-L-glutamate from L-histidine: step 1/3. The chain is Histidine ammonia-lyase from Vibrio vulnificus (strain YJ016).